We begin with the raw amino-acid sequence, 186 residues long: Large ribosomal subunit protein uL5 (186 aa).

It belongs to the universal ribosomal protein uL5 family. Part of the 50S ribosomal subunit; contacts the 5S rRNA and probably tRNA. Forms a bridge to the 30S subunit in the 70S ribosome.

In terms of biological role, this is one of the proteins that bind and probably mediate the attachment of the 5S RNA into the large ribosomal subunit, where it forms part of the central protuberance. In the 70S ribosome it contacts protein S13 of the 30S subunit (bridge B1b), connecting the 2 subunits; this bridge is implicated in subunit movement. May contact the P site tRNA; the 5S rRNA and some of its associated proteins might help stabilize positioning of ribosome-bound tRNAs. The chain is Large ribosomal subunit protein uL5 from Methanopyrus kandleri (strain AV19 / DSM 6324 / JCM 9639 / NBRC 100938).